Reading from the N-terminus, the 485-residue chain is NADH-quinone oxidoreductase subunit N (485 aa).

Transmembrane regions (helical) follow at residues 8 to 28 (LIAL…MLSI), 35 to 55 (FLNA…LWFV), 71 to 91 (GFAM…CTFA), 105 to 125 (FYLL…ANHL), 127 to 147 (TLFL…GYAF), 159 to 179 (YTIL…LVYA), 203 to 223 (LLAG…LVPF), 235 to 255 (PAPV…GVVM), 271 to 291 (VVLG…ALSQ), 297 to 317 (LLGY…IALQ), 326 to 346 (VGVY…VVSL), 373 to 393 (AAVM…LGFI), 408 to 430 (WWLV…RVAV), and 455 to 475 (IVVL…QPLI).

This sequence belongs to the complex I subunit 2 family. In terms of assembly, NDH-1 is composed of 13 different subunits. Subunits NuoA, H, J, K, L, M, N constitute the membrane sector of the complex.

It is found in the cell inner membrane. It carries out the reaction a quinone + NADH + 5 H(+)(in) = a quinol + NAD(+) + 4 H(+)(out). NDH-1 shuttles electrons from NADH, via FMN and iron-sulfur (Fe-S) centers, to quinones in the respiratory chain. The immediate electron acceptor for the enzyme in this species is believed to be ubiquinone. Couples the redox reaction to proton translocation (for every two electrons transferred, four hydrogen ions are translocated across the cytoplasmic membrane), and thus conserves the redox energy in a proton gradient. The sequence is that of NADH-quinone oxidoreductase subunit N from Salmonella paratyphi A (strain ATCC 9150 / SARB42).